The following is a 670-amino-acid chain: ATP synthase subunit alpha 2 (670 aa).

180–187 (GDRATGKT) provides a ligand contact to ATP. The tract at residues 527–670 (AEDAAGDIGG…DAEAEARHKR (144 aa)) is disordered. The segment covering 543 to 588 (ARGDADRDADHGANREVSREVSPEASREVSREVSREVSHEADRDAA) has biased composition (basic and acidic residues). Residues 589-599 (ADAARVAGRAP) show a composition bias toward low complexity. Over residues 621–639 (ADGDRASASRPRPDARGDA) the composition is skewed to basic and acidic residues. The span at 640–661 (ARTAPSPQGGAEVNVNAAANVD) shows a compositional bias: low complexity.

Belongs to the ATPase alpha/beta chains family. In terms of assembly, F-type ATPases have 2 components, CF(1) - the catalytic core - and CF(0) - the membrane proton channel. CF(1) has five subunits: alpha(3), beta(3), gamma(1), delta(1), epsilon(1). CF(0) has three main subunits: a(1), b(2) and c(9-12). The alpha and beta chains form an alternating ring which encloses part of the gamma chain. CF(1) is attached to CF(0) by a central stalk formed by the gamma and epsilon chains, while a peripheral stalk is formed by the delta and b chains.

The protein resides in the cell inner membrane. It catalyses the reaction ATP + H2O + 4 H(+)(in) = ADP + phosphate + 5 H(+)(out). In terms of biological role, produces ATP from ADP in the presence of a proton gradient across the membrane. The alpha chain is a regulatory subunit. This is ATP synthase subunit alpha 2 from Burkholderia pseudomallei (strain 668).